We begin with the raw amino-acid sequence, 293 residues long: Glutamyl-Q tRNA(Asp) synthetase (293 aa).

L-glutamate contacts are provided by residues 26-30 and aspartate 62; that span reads RYAPS. The 'HIGH' region signature appears at 29–39; it reads PSPTGALHLGN. The Zn(2+) site is built by cysteine 118, cysteine 120, tyrosine 131, and cysteine 135. L-glutamate is bound by residues tyrosine 178 and arginine 196. The short motif at 234-238 is the 'KMSKS' region element; it reads KLSKR. Lysine 237 contributes to the ATP binding site.

Belongs to the class-I aminoacyl-tRNA synthetase family. GluQ subfamily. Zn(2+) serves as cofactor.

Its function is as follows. Catalyzes the tRNA-independent activation of glutamate in presence of ATP and the subsequent transfer of glutamate onto a tRNA(Asp). Glutamate is transferred on the 2-amino-5-(4,5-dihydroxy-2-cyclopenten-1-yl) moiety of the queuosine in the wobble position of the QUC anticodon. This chain is Glutamyl-Q tRNA(Asp) synthetase, found in Parasynechococcus marenigrum (strain WH8102).